The primary structure comprises 79 residues: Conotoxin TxMEKL-021 (79 aa).

The signal sequence occupies residues 1 to 19 (MEKLTILLLVAVVLMSTQA). Residues 20–47 (LPQGGGEKRPRENIRFLSKRKSNAERWR) constitute a propeptide that is removed on maturation. 3 disulfides stabilise this stretch: cysteine 51–cysteine 65, cysteine 58–cysteine 69, and cysteine 64–cysteine 75.

This sequence belongs to the conotoxin O2 superfamily. Expressed by the venom duct.

Its subcellular location is the secreted. In Conus textile (Cloth-of-gold cone), this protein is Conotoxin TxMEKL-021.